A 192-amino-acid polypeptide reads, in one-letter code: MPKGCLVITVSGLAGSGTTTLCRKLAEHYGFKHVYAGLIFRQMAKERGMTLEEFQKYAELHPEIDREVDRRQIEAAKECNVVIEGRLAGWMVKNADLKIWLDAPIRVRAERVARREGITVEEAFMKIAEREMQNRKRYLNLYGIDINDLSIYDLIIDTSKWSPDGVFAIVKAAIDHLDPVGDAGSKKEKEVG.

Residue 12-20 (GLAGSGTTT) coordinates ATP.

It belongs to the cytidylate kinase family. Type 2 subfamily.

The protein resides in the cytoplasm. The catalysed reaction is CMP + ATP = CDP + ADP. The enzyme catalyses dCMP + ATP = dCDP + ADP. The protein is Cytidylate kinase of Pyrococcus furiosus (strain ATCC 43587 / DSM 3638 / JCM 8422 / Vc1).